A 342-amino-acid polypeptide reads, in one-letter code: Galactose mutarotase (342 aa).

Serine 14 carries the phosphoserine modification. Beta-D-galactose contacts are provided by residues 81-82 (NR) and histidine 107. Position 124 is a phosphoserine (serine 124). Histidine 176 serves as the catalytic Proton donor. Beta-D-galactose-binding positions include 176–178 (HSY), aspartate 243, glutamine 279, and glutamate 307. Glutamate 307 (proton acceptor) is an active-site residue.

This sequence belongs to the aldose epimerase family. Monomer.

Its subcellular location is the cytoplasm. The enzyme catalyses alpha-D-galactose = beta-D-galactose. It carries out the reaction alpha-D-glucose = beta-D-glucose. The protein operates within carbohydrate metabolism; hexose metabolism. Its pathway is carbohydrate metabolism; galactose metabolism. Mutarotase that catalyzes the interconversion of beta-D-galactose and alpha-D-galactose during galactose metabolism. Beta-D-galactose is metabolized in the liver into glucose 1-phosphate, the primary metabolic fuel, by the action of four enzymes that constitute the Leloir pathway: GALM, GALK1 (galactokinase), GALT (galactose-1-phosphate uridylyltransferase) and GALE (UDP-galactose-4'-epimerase). Involved in the maintenance of the equilibrium between the beta- and alpha-anomers of galactose, therefore ensuring a sufficient supply of the alpha-anomer for GALK1. Also active on D-glucose although shows a preference for galactose over glucose. In Rattus norvegicus (Rat), this protein is Galactose mutarotase (Galm).